The following is a 77-amino-acid chain: Small ribosomal subunit protein bS21 (77 aa).

It belongs to the bacterial ribosomal protein bS21 family.

The protein is Small ribosomal subunit protein bS21 of Methylococcus capsulatus (strain ATCC 33009 / NCIMB 11132 / Bath).